Consider the following 295-residue polypeptide: Glutamate-binding protein GluB (295 aa).

A signal peptide spans 1 to 26 (MSAKRTFTRIGAILGATALAGVTLTA). Cys-27 carries the N-palmitoyl cysteine lipid modification. The S-diacylglycerol cysteine moiety is linked to residue Cys-27.

The protein belongs to the bacterial solute-binding protein 3 family. In terms of assembly, the complex is composed of two ATP-binding proteins (GluA), two transmembrane proteins (GluC and GluD) and a solute-binding protein (GluB).

It localises to the cell membrane. Binding of glutamate or asparatate induces a higher thermal stability of the protein structure. Its function is as follows. Part of the ABC transporter complex GluABCD involved in glutamate uptake. Binds glutamate with a high affinity. Also binds aspartate with high affinity, suggesting that GluB could be involved in the transport of both amino acid residues into the cell. In Corynebacterium glutamicum (strain ATCC 13032 / DSM 20300 / JCM 1318 / BCRC 11384 / CCUG 27702 / LMG 3730 / NBRC 12168 / NCIMB 10025 / NRRL B-2784 / 534), this protein is Glutamate-binding protein GluB.